We begin with the raw amino-acid sequence, 250 residues long: Ubiquinone/menaquinone biosynthesis C-methyltransferase UbiE (250 aa).

Residues Thr74, Asp94, 122-123 (DA), and Ser139 contribute to the S-adenosyl-L-methionine site.

The protein belongs to the class I-like SAM-binding methyltransferase superfamily. MenG/UbiE family.

The catalysed reaction is a 2-demethylmenaquinol + S-adenosyl-L-methionine = a menaquinol + S-adenosyl-L-homocysteine + H(+). It carries out the reaction a 2-methoxy-6-(all-trans-polyprenyl)benzene-1,4-diol + S-adenosyl-L-methionine = a 5-methoxy-2-methyl-3-(all-trans-polyprenyl)benzene-1,4-diol + S-adenosyl-L-homocysteine + H(+). It functions in the pathway quinol/quinone metabolism; menaquinone biosynthesis; menaquinol from 1,4-dihydroxy-2-naphthoate: step 2/2. Its pathway is cofactor biosynthesis; ubiquinone biosynthesis. In terms of biological role, methyltransferase required for the conversion of demethylmenaquinol (DMKH2) to menaquinol (MKH2) and the conversion of 2-polyprenyl-6-methoxy-1,4-benzoquinol (DDMQH2) to 2-polyprenyl-3-methyl-6-methoxy-1,4-benzoquinol (DMQH2). The sequence is that of Ubiquinone/menaquinone biosynthesis C-methyltransferase UbiE from Paracoccus denitrificans (strain Pd 1222).